The primary structure comprises 254 residues: Receptor expression-enhancing protein 2 (254 aa).

2 consecutive transmembrane segments (helical) span residues 1-21 (MVSW…YPAY) and 35-55 (YVKW…ETLT). At Ser-152 the chain carries Phosphoserine. The disordered stretch occupies residues 194-254 (LSLRSSTSQP…KKSSGGGDSA (61 aa)). Positions 205-219 (PRTETSEDDLGDKAP) are enriched in basic and acidic residues.

The protein belongs to the DP1 family. As to quaternary structure, interacts with odorant receptor proteins.

It localises to the membrane. Required for endoplasmic reticulum (ER) network formation, shaping and remodeling. May enhance the cell surface expression of odorant receptors. The polypeptide is Receptor expression-enhancing protein 2 (Reep2) (Mus musculus (Mouse)).